A 160-amino-acid chain; its full sequence is Probable chemoreceptor glutamine deamidase CheD (160 aa).

Belongs to the CheD family.

The enzyme catalyses L-glutaminyl-[protein] + H2O = L-glutamyl-[protein] + NH4(+). Functionally, probably deamidates glutamine residues to glutamate on methyl-accepting chemotaxis receptors (MCPs), playing an important role in chemotaxis. The polypeptide is Probable chemoreceptor glutamine deamidase CheD (Desulfitobacterium hafniense (strain DSM 10664 / DCB-2)).